The sequence spans 392 residues: Alanine--glyoxylate aminotransferase (392 aa).

The residue at position 209 (K209) is an N6-(pyridoxal phosphate)lysine. The residue at position 225 (K225) is an N6-acetyllysine; alternate. The residue at position 225 (K225) is an N6-succinyllysine; alternate. 2 positions are modified to N6-acetyllysine: K234 and K312. R360 contributes to the substrate binding site. The short motif at 390 to 392 is the Microbody targeting signal element; the sequence is SQL.

This sequence belongs to the class-V pyridoxal-phosphate-dependent aminotransferase family. Homodimer. The cofactor is pyridoxal 5'-phosphate.

It is found in the peroxisome. The enzyme catalyses L-serine + pyruvate = 3-hydroxypyruvate + L-alanine. It carries out the reaction glyoxylate + L-alanine = glycine + pyruvate. In terms of biological role, peroxisomal aminotransferase that catalyzes the transamination of glyoxylate to glycine and contributes to the glyoxylate detoxification. Also catalyzes the transamination between L-serine and pyruvate and contributes to gluconeogenesis from the L-serine metabolism. In Oryctolagus cuniculus (Rabbit), this protein is Alanine--glyoxylate aminotransferase.